We begin with the raw amino-acid sequence, 401 residues long: Tyrosine--tRNA ligase (401 aa).

Residues 42-51 (PTAPDLHLGH) carry the 'HIGH' region motif. Positions 226-230 (KMSKS) match the 'KMSKS' region motif. Position 229 (lysine 229) interacts with ATP. Positions 336–397 (IALAQLLKQI…GKRRIAKLSI (62 aa)) constitute an S4 RNA-binding domain.

Belongs to the class-I aminoacyl-tRNA synthetase family. TyrS type 2 subfamily. Homodimer.

It localises to the cytoplasm. The enzyme catalyses tRNA(Tyr) + L-tyrosine + ATP = L-tyrosyl-tRNA(Tyr) + AMP + diphosphate + H(+). Its function is as follows. Catalyzes the attachment of tyrosine to tRNA(Tyr) in a two-step reaction: tyrosine is first activated by ATP to form Tyr-AMP and then transferred to the acceptor end of tRNA(Tyr). The sequence is that of Tyrosine--tRNA ligase from Legionella pneumophila (strain Lens).